Consider the following 448-residue polypeptide: Tapasin (448 aa).

Residues M1–A20 form the signal peptide. Topologically, residues G21 to I414 are lumenal. C27 and C91 are joined by a disulfide. N-linked (GlcNAc...) asparagine glycosylation occurs at N253. The Ig-like C1-type domain occupies P292 to T399. A disulfide bond links C315 and C382. The chain crosses the membrane as a helical span at residues G415–V435. The Cytoplasmic portion of the chain corresponds to Y436–E448.

As to quaternary structure, heterodimer with PDIA3; disulfide-linked. Obligatory mediator for the interaction between newly assembled MHC class I molecules, calreticulin, PDIA3 and TAP. Up to 4 MHC class I/tapasin complexes bind to 1 TAP. Interacts with HLA-G-B2M complex; this interaction is required for loading of high affinity peptides. On its own or as part of MHC class I peptide loading complex, interacts with ligand-free MR1 or MR1-B2M complex, providing for stable MR1 pools ready for metabolite antigen processing.

Its subcellular location is the endoplasmic reticulum membrane. Functionally, involved in the association of MHC class I with transporter associated with antigen processing (TAP) and in the assembly of MHC class I with peptide (peptide loading). The protein is Tapasin (TAPBP) of Chlorocebus aethiops (Green monkey).